The sequence spans 232 residues: Lipopolysaccharide core heptose(II) kinase WaaY (232 aa).

It belongs to the protein kinase superfamily. RfaY/WaaY family.

The enzyme catalyses alpha-D-Glc-(1-&gt;3)-[L-alpha-D-Hep-(1-&gt;7)]-L-alpha-D-Hep-(1-&gt;3)-4-O-PO3(2-)-L-alpha-D-Hep-(1-&gt;5)-[alpha-Kdo-(2-&gt;4)]-alpha-Kdo-(2-&gt;6)-lipid A + ATP = alpha-D-Glc-(1-&gt;3)-[L-alpha-D-Hep-(1-&gt;7)]-4-O-PO3(2-)-L-alpha-D-Hep-(1-&gt;3)-4-O-PO3(2-)-L-alpha-D-Hep-(1-&gt;5)-[alpha-Kdo-(2-&gt;4)]-alpha-Kdo-(2-&gt;6)-lipid A + ADP + H(+). Its pathway is bacterial outer membrane biogenesis; LPS core biosynthesis. Kinase involved in the biosynthesis of the core oligosaccharide region of lipopolysaccharide (LPS). Catalyzes the phosphorylation of the second heptose unit (HepII) of the inner core. The polypeptide is Lipopolysaccharide core heptose(II) kinase WaaY (Salmonella typhimurium (strain LT2 / SGSC1412 / ATCC 700720)).